The chain runs to 183 residues: Adenylate kinase (183 aa).

Position 12–17 (12–17 (GAGKGT)) interacts with ATP. Positions 32-61 (STGDLLRSEVAAGSELGKEAEAVMNRGELV) are NMP. Residues threonine 33, arginine 38, 59–61 (ELV), 86–89 (GFPR), and glutamine 93 each bind AMP. The LID stretch occupies residues 127-133 (SRGRADD). Arginine 128 is an ATP binding site. AMP contacts are provided by arginine 130 and arginine 141. Glycine 169 serves as a coordination point for ATP.

This sequence belongs to the adenylate kinase family. As to quaternary structure, monomer.

The protein localises to the cytoplasm. The catalysed reaction is AMP + ATP = 2 ADP. The protein operates within purine metabolism; AMP biosynthesis via salvage pathway; AMP from ADP: step 1/1. In terms of biological role, catalyzes the reversible transfer of the terminal phosphate group between ATP and AMP. Plays an important role in cellular energy homeostasis and in adenine nucleotide metabolism. The chain is Adenylate kinase from Synechococcus sp. (strain CC9902).